A 314-amino-acid polypeptide reads, in one-letter code: DNA-directed RNA polymerase subunit alpha (314 aa).

The segment at 1 to 228 (MIEIEKPKIE…EHLNIFVGLT (228 aa)) is alpha N-terminal domain (alpha-NTD). Residues 245–314 (KEKVLEMTIE…ELGLGLRKDD (70 aa)) are alpha C-terminal domain (alpha-CTD).

It belongs to the RNA polymerase alpha chain family. Homodimer. RNAP is composed of a core of 2 alpha, a beta and a beta' subunit. The core is associated with a delta subunit, and at least one of epsilon or omega. When a sigma factor is associated with the core the holoenzyme is formed, which can initiate transcription.

The enzyme catalyses RNA(n) + a ribonucleoside 5'-triphosphate = RNA(n+1) + diphosphate. Its function is as follows. DNA-dependent RNA polymerase catalyzes the transcription of DNA into RNA using the four ribonucleoside triphosphates as substrates. The sequence is that of DNA-directed RNA polymerase subunit alpha from Bacillus subtilis (strain 168).